Consider the following 605-residue polypeptide: Sulfite reductase [NADPH] flavoprotein alpha-component (605 aa).

A Flavodoxin-like domain is found at 70–208; that stretch reads LTIIYASQTG…PAAEWRVKAL (139 aa). Residues 76 to 81, 123 to 126, and 159 to 168 each bind FMN; these read SQTGNA, STHG, and LGDSSYEFFC. The FAD-binding FR-type domain occupies 240-454; it reads QNPYEATLLT…VEENNNFKLP (215 aa). FAD-binding positions include Thr328, Gly362, 392–395, 410–412, and 425–428; these read RLYS, TVG, and GGAS. NADP(+)-binding positions include 525–526, 531–535, and Asp567; these read SR and KVYVQ. Tyr605 lines the FAD pocket.

The protein belongs to the NADPH-dependent sulphite reductase flavoprotein subunit CysJ family. In the N-terminal section; belongs to the flavodoxin family. It in the C-terminal section; belongs to the flavoprotein pyridine nucleotide cytochrome reductase family. As to quaternary structure, alpha(8)-beta(8). The alpha component is a flavoprotein, the beta component is a hemoprotein. The cofactor is FAD. Requires FMN as cofactor.

It catalyses the reaction hydrogen sulfide + 3 NADP(+) + 3 H2O = sulfite + 3 NADPH + 4 H(+). The protein operates within sulfur metabolism; hydrogen sulfide biosynthesis; hydrogen sulfide from sulfite (NADPH route): step 1/1. In terms of biological role, component of the sulfite reductase complex that catalyzes the 6-electron reduction of sulfite to sulfide. This is one of several activities required for the biosynthesis of L-cysteine from sulfate. The flavoprotein component catalyzes the electron flow from NADPH -&gt; FAD -&gt; FMN to the hemoprotein component. This is Sulfite reductase [NADPH] flavoprotein alpha-component from Photobacterium profundum (strain SS9).